We begin with the raw amino-acid sequence, 333 residues long: Holliday junction branch migration complex subunit RuvB (333 aa).

A large ATPase domain (RuvB-L) region spans residues 1-182; the sequence is MDERLLSGES…FGVLSRLEYY (182 aa). Residues leucine 21, arginine 22, glycine 63, lysine 66, threonine 67, threonine 68, 129–131, arginine 172, tyrosine 182, and arginine 219 contribute to the ATP site; that span reads EDF. Threonine 67 is a binding site for Mg(2+). Residues 183-253 form a small ATPAse domain (RuvB-S) region; that stretch reads TVDQLSAIVE…ITQMALELLQ (71 aa). Residues 256–333 are head domain (RuvB-H); it reads KLGLDHIDHK…EHFGMEIPKV (78 aa). DNA is bound by residues arginine 311 and arginine 316.

This sequence belongs to the RuvB family. As to quaternary structure, homohexamer. Forms an RuvA(8)-RuvB(12)-Holliday junction (HJ) complex. HJ DNA is sandwiched between 2 RuvA tetramers; dsDNA enters through RuvA and exits via RuvB. An RuvB hexamer assembles on each DNA strand where it exits the tetramer. Each RuvB hexamer is contacted by two RuvA subunits (via domain III) on 2 adjacent RuvB subunits; this complex drives branch migration. In the full resolvosome a probable DNA-RuvA(4)-RuvB(12)-RuvC(2) complex forms which resolves the HJ.

The protein localises to the cytoplasm. It carries out the reaction ATP + H2O = ADP + phosphate + H(+). Functionally, the RuvA-RuvB-RuvC complex processes Holliday junction (HJ) DNA during genetic recombination and DNA repair, while the RuvA-RuvB complex plays an important role in the rescue of blocked DNA replication forks via replication fork reversal (RFR). RuvA specifically binds to HJ cruciform DNA, conferring on it an open structure. The RuvB hexamer acts as an ATP-dependent pump, pulling dsDNA into and through the RuvAB complex. RuvB forms 2 homohexamers on either side of HJ DNA bound by 1 or 2 RuvA tetramers; 4 subunits per hexamer contact DNA at a time. Coordinated motions by a converter formed by DNA-disengaged RuvB subunits stimulates ATP hydrolysis and nucleotide exchange. Immobilization of the converter enables RuvB to convert the ATP-contained energy into a lever motion, pulling 2 nucleotides of DNA out of the RuvA tetramer per ATP hydrolyzed, thus driving DNA branch migration. The RuvB motors rotate together with the DNA substrate, which together with the progressing nucleotide cycle form the mechanistic basis for DNA recombination by continuous HJ branch migration. Branch migration allows RuvC to scan DNA until it finds its consensus sequence, where it cleaves and resolves cruciform DNA. The chain is Holliday junction branch migration complex subunit RuvB from Bacillus cereus (strain G9842).